Consider the following 219-residue polypeptide: Mitochondrial fission factor homolog A (219 aa).

The Cytoplasmic segment spans residues 1-199; the sequence is MAEINRMQYE…ENKERVKHEM (199 aa). Residues 164-194 are a coiled coil; it reads DLALADAASLRRQIIKLNRRLLLLEEENKER. The helical; Anchor for type IV membrane protein transmembrane segment at 200–217 threads the bilayer; the sequence is TMYSIIIIFGLLNSWLWL. Residues 218-219 lie on the Extracellular side of the membrane; sequence RR.

It belongs to the Tango11 family.

The protein localises to the mitochondrion outer membrane. It localises to the peroxisome. It is found in the cytoplasmic vesicle. Its subcellular location is the secretory vesicle. The protein resides in the synaptic vesicle. Plays a role in mitochondrial and peroxisomal fission. Promotes the recruitment and association of the fission mediator dynamin-related protein 1 (DNM1L) to the mitochondrial surface. The sequence is that of Mitochondrial fission factor homolog A (mff-a) from Xenopus laevis (African clawed frog).